The sequence spans 201 residues: Large ribosomal subunit protein uL4 (201 aa).

The tract at residues 44 to 71 (RAQKTRAEVTGSGKKPWRQKGTGRARSG) is disordered.

Belongs to the universal ribosomal protein uL4 family. In terms of assembly, part of the 50S ribosomal subunit.

In terms of biological role, one of the primary rRNA binding proteins, this protein initially binds near the 5'-end of the 23S rRNA. It is important during the early stages of 50S assembly. It makes multiple contacts with different domains of the 23S rRNA in the assembled 50S subunit and ribosome. Its function is as follows. Forms part of the polypeptide exit tunnel. The polypeptide is Large ribosomal subunit protein uL4 (Escherichia fergusonii (strain ATCC 35469 / DSM 13698 / CCUG 18766 / IAM 14443 / JCM 21226 / LMG 7866 / NBRC 102419 / NCTC 12128 / CDC 0568-73)).